The sequence spans 350 residues: Glycolate oxidase subunit GlcE (350 aa).

The 173-residue stretch at 1 to 173 (MLRECDYSQA…TEISMKVLPR (173 aa)) folds into the FAD-binding PCMH-type domain.

As to quaternary structure, the glycolate oxidase likely consists of three subunits, GlcD, GlcE and GlcF. FAD serves as cofactor.

Its subcellular location is the cell inner membrane. The enzyme catalyses glycolate + A = glyoxylate + AH2. It catalyses the reaction (R)-lactate + A = pyruvate + AH2. With respect to regulation, in vitro the glycolate oxidase activity is inhibited by the sulfhydryl inhibitors CuSO4 and PCMB, by KCN, but not by the metal complexing agent EDTA. Functionally, component of a complex that catalyzes the oxidation of glycolate to glyoxylate. Is required for E.coli to grow on glycolate as a sole source of carbon. Is also able to oxidize D-lactate ((R)-lactate) with a similar rate. Does not link directly to O(2), and 2,6-dichloroindophenol (DCIP) and phenazine methosulfate (PMS) can act as artificial electron acceptors in vitro, but the physiological molecule that functions as a primary electron acceptor during glycolate oxidation is unknown. The protein is Glycolate oxidase subunit GlcE of Escherichia coli (strain K12).